We begin with the raw amino-acid sequence, 461 residues long: Glyceraldehyde-3-phosphate dehydrogenase-like protein (461 aa).

Thr421 is subject to Phosphothreonine.

Belongs to the glyceraldehyde-3-phosphate dehydrogenase family.

This Pseudomonas aeruginosa (strain UCBPP-PA14) protein is Glyceraldehyde-3-phosphate dehydrogenase-like protein (gap2).